The primary structure comprises 632 residues: Probable potassium transport system protein Kup 1 (632 aa).

The next 12 membrane-spanning stretches (helical) occupy residues 19-39, 59-79, 110-130, 146-166, 178-198, 213-233, 256-276, 298-318, 346-366, 373-393, 403-423, and 428-448; these read LVLG…LYAL, VISM…VVFV, VLMM…VITP, PQLS…LFLI, FGPI…LHLV, ITFL…VFLV, WFVL…AMLL, MVLL…SGAF, IYLP…VISF, AAAY…LAAV, PALV…FFAA, and VAEG…LLMT.

This sequence belongs to the HAK/KUP transporter (TC 2.A.72) family.

It is found in the cell inner membrane. The catalysed reaction is K(+)(in) + H(+)(in) = K(+)(out) + H(+)(out). Functionally, transport of potassium into the cell. Likely operates as a K(+):H(+) symporter. This Cupriavidus necator (strain ATCC 17699 / DSM 428 / KCTC 22496 / NCIMB 10442 / H16 / Stanier 337) (Ralstonia eutropha) protein is Probable potassium transport system protein Kup 1.